The chain runs to 119 residues: Large ribosomal subunit protein uL18 (119 aa).

It belongs to the universal ribosomal protein uL18 family. In terms of assembly, part of the 50S ribosomal subunit; part of the 5S rRNA/L5/L18/L25 subcomplex. Contacts the 5S and 23S rRNAs.

Its function is as follows. This is one of the proteins that bind and probably mediate the attachment of the 5S RNA into the large ribosomal subunit, where it forms part of the central protuberance. The sequence is that of Large ribosomal subunit protein uL18 from Nitrosomonas europaea (strain ATCC 19718 / CIP 103999 / KCTC 2705 / NBRC 14298).